Reading from the N-terminus, the 365-residue chain is PHD finger protein 6 (365 aa).

Serine 2 is subject to N-acetylserine. Short sequence motifs (nuclear localization signal) lie at residues 13-16 (RQRK) and 129-133 (RKHKK). A C2HC pre-PHD-type 1 zinc finger spans residues 14-52 (QRKCGFCKSNRDKECGQLLISENQKVAAHHKCMLFSSAL). The extended PHD1 domain (ePHD1) stretch occupies residues 14–132 (QRKCGFCKSN…IYMVYCRKHK (119 aa)). A PHD-type 1 zinc finger spans residues 80 to 132 (LMCSLCHCPGATIGCDVKTCHRTYHYHCALHDKAQIREKPSQGIYMVYCRKHK). A phosphoserine mark is found at serine 138, serine 145, and serine 155. Residues 139 to 211 (EADLEESFNE…RSSPSDTRPK (73 aa)) form a disordered region. A Nucleolar localization signal motif is present at residues 157 to 169 (KSKKKSRKGRPRK). Residues 157-171 (KSKKKSRKGRPRKTN) show a composition bias toward basic residues. Residue lysine 173 forms a Glycyl lysine isopeptide (Lys-Gly) (interchain with G-Cter in SUMO2) linkage. Serine 183 and serine 199 each carry phosphoserine. Residues 209-249 (RPKCGFCHVGEEENEARGKLHIFNAKKAAAHYKCMLFSSGT) form a C2HC pre-PHD-type 2 zinc finger. An extended PHD2 domain (ePHD2) region spans residues 209-330 (RPKCGFCHVG…IYKLYCKNHS (122 aa)). A Glycyl lysine isopeptide (Lys-Gly) (interchain with G-Cter in SUMO2) cross-link involves residue lysine 227. Residues 278–330 (MKCTLCSQPGATIGCEIKACVKTYHYHCGVQDKAKYIENMSRGIYKLYCKNHS) form a PHD-type 2 zinc finger. Positions 330–365 (SGNDERDEEDEERESKSRGKVEIDQQQLTQQQLNGN) are disordered. The segment covering 342 to 352 (RESKSRGKVEI) has biased composition (basic and acidic residues). Over residues 354–365 (QQQLTQQQLNGN) the composition is skewed to low complexity. Threonine 358 bears the Phosphothreonine mark.

Interacts with UBTF. Interacts with the NuRD complex component RBBP4 (via the nucleolar localization motif), the interaction mediates transcriptional repression activity.

It is found in the nucleus. The protein resides in the nucleolus. The protein localises to the chromosome. Its subcellular location is the centromere. It localises to the kinetochore. Transcriptional regulator that associates with ribosomal RNA promoters and suppresses ribosomal RNA (rRNA) transcription. This chain is PHD finger protein 6 (PHF6), found in Pongo abelii (Sumatran orangutan).